Consider the following 278-residue polypeptide: DNA adenine methylase (278 aa).

S-adenosyl-L-methionine-binding residues include tryptophan 10, lysine 14, aspartate 54, and aspartate 181.

Belongs to the N(4)/N(6)-methyltransferase family.

The enzyme catalyses a 2'-deoxyadenosine in DNA + S-adenosyl-L-methionine = an N(6)-methyl-2'-deoxyadenosine in DNA + S-adenosyl-L-homocysteine + H(+). An alpha subtype methylase, recognizes the double-stranded sequence 5'-GATC-3' and methylates A-2. May be involved in methyl-directed DNA mismatch repair, initiation of chromosome replication and gene expression. The chain is DNA adenine methylase (dam) from Salmonella typhimurium.